A 662-amino-acid polypeptide reads, in one-letter code: UvrABC system protein B (662 aa).

The Helicase ATP-binding domain maps to 25–411; the sequence is DGIIAGDKFQ…STRIVEQVIR (387 aa). Position 38–45 (38–45) interacts with ATP; the sequence is GVTGSGKT. The short motif at 91–114 is the Beta-hairpin element; it reads YYDYYQPEAYVPARDLYIEKDASI. The Helicase C-terminal domain occupies 428–594; the sequence is QMEHIYGEVK…TIKKAIEDIL (167 aa). One can recognise a UVR domain in the interval 625–660; sequence KKLIKKLEAQMAEYADMLMFEEAAVIRDKIEEVKRI.

Belongs to the UvrB family. As to quaternary structure, forms a heterotetramer with UvrA during the search for lesions. Interacts with UvrC in an incision complex.

The protein resides in the cytoplasm. Functionally, the UvrABC repair system catalyzes the recognition and processing of DNA lesions. A damage recognition complex composed of 2 UvrA and 2 UvrB subunits scans DNA for abnormalities. Upon binding of the UvrA(2)B(2) complex to a putative damaged site, the DNA wraps around one UvrB monomer. DNA wrap is dependent on ATP binding by UvrB and probably causes local melting of the DNA helix, facilitating insertion of UvrB beta-hairpin between the DNA strands. Then UvrB probes one DNA strand for the presence of a lesion. If a lesion is found the UvrA subunits dissociate and the UvrB-DNA preincision complex is formed. This complex is subsequently bound by UvrC and the second UvrB is released. If no lesion is found, the DNA wraps around the other UvrB subunit that will check the other stand for damage. The polypeptide is UvrABC system protein B (Treponema denticola (strain ATCC 35405 / DSM 14222 / CIP 103919 / JCM 8153 / KCTC 15104)).